The sequence spans 2349 residues: Reducing polyketide synthase AFT16-1 (2349 aa).

Positions 1–14 are enriched in basic and acidic residues; that stretch reads MNGKSRDNGHDGKR. 2 disordered regions span residues 1–21 and 37–80; these read MNGK…VPAE and TNPS…TSNS. The region spanning 20-462 is the Ketosynthase family 3 (KS3) domain; that stretch reads AEPIAIVGTA…GTNAHTILES (443 aa). Residues Cys-194, His-333, and His-382 each act as for beta-ketoacyl synthase activity in the active site. The malonyl-CoA:ACP transacylase (MAT) domain stretch occupies residues 578–888; it reads VFTGQGAQWP…LLYKGVLERF (311 aa). The N-terminal hotdog fold stretch occupies residues 958–1092; that stretch reads HPLLGFRSVD…GDILLSHFAK (135 aa). Residues 958–1263 are dehydratase (DH) domain; it reads HPLLGFRSVD…QVEGLKFSCM (306 aa). Positions 958–1269 constitute a PKS/mFAS DH domain; sequence HPLLGFRSVD…FSCMYPAQET (312 aa). His-990 (proton acceptor; for dehydratase activity) is an active-site residue. A C-terminal hotdog fold region spans residues 1111 to 1269; sequence MSSVEPSLFY…FSCMYPAQET (159 aa). Catalysis depends on Asp-1170, which acts as the Proton donor; for dehydratase activity. A ketoreductase (KR) domain region spans residues 1976–2164; sequence SPNKTYLLVG…VVGVGYVARA (189 aa). Residues 2273–2347 enclose the Carrier domain; the sequence is EILSGSLKQK…GLCLEAIGQW (75 aa). Residue Ser-2307 is modified to O-(pantetheine 4'-phosphoryl)serine.

It functions in the pathway mycotoxin biosynthesis. Functionally, reducing polyketide synthase; part of the gene clusters that mediate the biosynthesis of the host-selective toxins (HSTs) AF-toxins responsible for Alternaria black spot of strawberry disease by the strawberry pathotype. AF-toxin I and III are valine derivatives of 2,3-dyhydroxy-isovaleric acid and 2-hydroxy-isovaleric acid respectively, while AF II is an isoleucine derivative of 2-hydroxy-valeric acid. These derivatives are bound to a 9,10-epoxy-8-hydroxy-9-methyl-decatrienoic acid (EDA) moiety. On cellular level, AF-toxins affect plasma membrane of susceptible cells and cause a sudden increase in loss of K(+) after a few minutes of toxin treatment. The aldo-keto reductase AFTS1 catalyzes the conversion of 2-keto-isovaleric acid (2-KIV) to 2-hydroxy-isovaleric acid (2-HIV) by reduction of its ketone to an alcohol. The acyl-CoA ligase AFT1, the hydrolase AFT2 and the enoyl-CoA hydratases AFT3 and AFT6, but also the polyketide synthase AFT9, the acyl-CoA dehydrogenase AFT10, the cytochrome P450 monooxygenase AFT11 and the oxidoreductase AFT12 are all involved in the biosynthesis of the AK-, AF- and ACT-toxin common EDA structural moiety. The exact function of each enzyme, and of additional enzymes identified within the AF-toxin clusters have still to be determined. The polypeptide is Reducing polyketide synthase AFT16-1 (Alternaria alternata (Alternaria rot fungus)).